Consider the following 121-residue polypeptide: Large ribosomal subunit protein bL20 (121 aa).

It belongs to the bacterial ribosomal protein bL20 family.

Functionally, binds directly to 23S ribosomal RNA and is necessary for the in vitro assembly process of the 50S ribosomal subunit. It is not involved in the protein synthesizing functions of that subunit. The sequence is that of Large ribosomal subunit protein bL20 from Wolbachia sp. subsp. Brugia malayi (strain TRS).